We begin with the raw amino-acid sequence, 456 residues long: Probable transcription factor At3g04930 (456 aa).

The interval Met-1–Pro-71 is disordered. Acidic residues-rich tracts occupy residues Glu-15–Asp-38 and Ala-50–Leu-62. The residue at position 16 (Ser-16) is a Phosphoserine.

Belongs to the GeBP family.

The sequence is that of Probable transcription factor At3g04930 from Arabidopsis thaliana (Mouse-ear cress).